Reading from the N-terminus, the 106-residue chain is Gibberellin-regulated protein 4 (106 aa).

Residues 1–25 (MAKSYGAIFLLTLIVLFMLQTMVMA) form the signal peptide.

The protein belongs to the GASA family. In terms of processing, six disulfide bonds may be present. Expressed in flower buds, style, stamen filaments, vasculature of petals, root phloem, vasculature of cotyledons and rosette leaves and developing embryo.

The protein resides in the secreted. In terms of biological role, gibberellin-regulated protein involved in the regulation of floral meristem and floral organ identity, and promotion of seed size and weight. May play a role in the promotion of gibberellin responses such as regulation of flowering under short-day conditions, seed germination and inhibition of gibberellin oxidase. Possesses redox activity in E.coli and may function in redox regulation in planta. This chain is Gibberellin-regulated protein 4 (GASA4), found in Arabidopsis thaliana (Mouse-ear cress).